Consider the following 719-residue polypeptide: B3 domain-containing protein Os03g0120900 (719 aa).

The segment at residues 7–110 (HHHFIKVMVG…HFMVLPFGLN (104 aa)) is a DNA-binding region (TF-B3). Disordered regions lie at residues 328–381 (RGSF…RSEQ) and 412–443 (EEPQHNQGENEGNLDQVNNKETDEEQIERNAV). Basic and acidic residues predominate over residues 351-366 (DSAENTLKERSEERQP). Over residues 416–430 (HNQGENEGNLDQVNN) the composition is skewed to polar residues.

The protein localises to the nucleus. The chain is B3 domain-containing protein Os03g0120900 from Oryza sativa subsp. japonica (Rice).